The following is a 239-amino-acid chain: Large ribosomal subunit protein uL1 (239 aa).

Belongs to the universal ribosomal protein uL1 family. As to quaternary structure, part of the 50S ribosomal subunit.

Functionally, binds directly to 23S rRNA. The L1 stalk is quite mobile in the ribosome, and is involved in E site tRNA release. Its function is as follows. Protein L1 is also a translational repressor protein, it controls the translation of the L11 operon by binding to its mRNA. This chain is Large ribosomal subunit protein uL1, found in Rickettsia africae (strain ESF-5).